Reading from the N-terminus, the 898-residue chain is Transportin-1 (898 aa).

HEAT repeat units lie at residues 19-46, 51-89, 98-131, 137-174, 181-211, 224-251, 263-290, 306-397, 405-433, 445-472, 486-519, 527-560, 568-606, 614-665, 676-707, 715-748, 756-791, 799-832, 841-872, and 875-895; these read GLQQ…QKLE, YPDF…AHFQ, FIKS…KGEL, LLPK…LDSD, NIMI…QFII, FIEN…VMLL, HNIV…FWLT, PKLI…LANV, HILP…GAIA, PELI…TLSR, LKPL…EEEA, LAYI…ADSV, EYIQ…TALQ, EPVY…GLGG, ILTL…KACF, ADFM…IQMG, PMVL…YVCP, QQFI…ISVN, IFFC…KNQV, and ENWR…LAAF. The Importin N-terminal domain occupies 41–109; it reads VQQKLEQLNQ…KSECLNNIGD (69 aa). The disordered stretch occupies residues 347-374; that stretch reads FHRSRTVAQQHEEDGIEEEDDDDDEIDD. The segment covering 360 to 374 has biased composition (acidic residues); sequence DGIEEEDDDDDEIDD.

Belongs to the importin beta family. Importin beta-2 subfamily. Identified in a complex that contains TNPO1, RAN and RANBP1. Binds HNRPA1, HNRPA2, HNRNPDL, RPS7, RPL5 and RAN. Interacts with H2A, H2B, H3 and H4 histones. Interacts with isoform 1 and isoform 5 of ADAR/ADAR1 (via DRBM 3 domain). Interacts with SNAI1 (via zinc fingers); the interaction mediates SNAI1 nuclear import. Interacts with SNAI2 (via zinc fingers). Interacts with RPL23A (via BIB domain) and SRP19; this interaction is involved in RPL23A and SRP19 import into the nucleus. Interacts (via HEAT repeats 8-12) with BAP1 (via non-classical PY-NLS); this interaction is direct, is involved in BAP1 nuclear import and disrupts BAP1 homodimerization.

The protein resides in the cytoplasm. It is found in the nucleus. Functions in nuclear protein import as nuclear transport receptor. Serves as receptor for nuclear localization signals (NLS) in cargo substrates. May mediate docking of the importin/substrate complex to the nuclear pore complex (NPC) through binding to nucleoporin and the complex is subsequently translocated through the pore by an energy requiring, Ran-dependent mechanism. At the nucleoplasmic side of the NPC, Ran binds to the importin, the importin/substrate complex dissociates and importin is re-exported from the nucleus to the cytoplasm where GTP hydrolysis releases Ran. The directionality of nuclear import is thought to be conferred by an asymmetric distribution of the GTP- and GDP-bound forms of Ran between the cytoplasm and nucleus. Involved in nuclear import of M9-containing proteins. In vitro, binds directly to the M9 region of the heterogeneous nuclear ribonucleoproteins (hnRNP), A1 and A2 and mediates their nuclear import. Involved in hnRNP A1/A2 nuclear export. Mediates the nuclear import of ribosomal proteins RPL23A, RPS7 and RPL5. In vitro, mediates nuclear import of SRP19. Mediates the import of histones H2A, H2B, H3 and H4. Mediates nuclear import of ADAR/ADAR1 in a RanGTP-dependent manner. Main mediator of PR-DUB complex component BAP1 nuclear import; acts redundantly with the karyopherins KPNA1 and KPNA2. In Mus musculus (Mouse), this protein is Transportin-1 (Tnpo1).